Consider the following 372-residue polypeptide: Beta-1,4-galactosyltransferase 2 (372 aa).

The Cytoplasmic segment spans residues 1–15 (MSRLLGGTLERVCKA). Residues 16–36 (VLLLCLLHFLVAVILYFDVYA) form a helical; Signal-anchor for type II membrane protein membrane-spanning segment. Topologically, residues 37-372 (QHLAFFSRFS…GRPPSWPPRG (336 aa)) are lumenal. Residues 56–97 (PAASSSSSSSNCSRPNATASSSGLPEVPSALPGPTAPTLPPC) are disordered. N-linked (GlcNAc...) asparagine glycans are attached at residues N66 and N71. Positions 66–78 (NCSRPNATASSSG) are enriched in polar residues. C97 and C139 are disulfide-bonded. Residues 150 to 154 (PFRHR), 189 to 191 (FNR), 217 to 218 (VD), and W278 contribute to the UDP-alpha-D-galactose site. A disulfide bond links C211 and C230. D218 provides a ligand contact to Mn(2+). Residue 280–283 (GEDD) coordinates N-acetyl-D-glucosamine. Residue H311 coordinates Mn(2+). 311–313 (HDR) contacts UDP-alpha-D-galactose. R323 serves as a coordination point for N-acetyl-D-glucosamine. An N-linked (GlcNAc...) asparagine glycan is attached at N357.

Belongs to the glycosyltransferase 7 family. Mn(2+) is required as a cofactor. Weakly expressed in various tissues. Highest expression in prostate, testis, ovary, intestine, muscle, and in fetal brain.

It localises to the golgi apparatus. The protein resides in the golgi stack membrane. It catalyses the reaction D-glucose + UDP-alpha-D-galactose = lactose + UDP + H(+). The catalysed reaction is an N-acetyl-beta-D-glucosaminyl derivative + UDP-alpha-D-galactose = a beta-D-galactosyl-(1-&gt;4)-N-acetyl-beta-D-glucosaminyl derivative + UDP + H(+). It carries out the reaction N-acetyl-D-glucosamine + UDP-alpha-D-galactose = beta-D-galactosyl-(1-&gt;4)-N-acetyl-D-glucosamine + UDP + H(+). It participates in protein modification; protein glycosylation. In terms of biological role, responsible for the synthesis of complex-type N-linked oligosaccharides in many glycoproteins as well as the carbohydrate moieties of glycolipids. Can produce lactose. This is Beta-1,4-galactosyltransferase 2 from Homo sapiens (Human).